The sequence spans 357 residues: 4-hydroxy-3-methylbut-2-en-1-yl diphosphate synthase (flavodoxin) (357 aa).

Cys264, Cys267, Cys299, and Glu306 together coordinate [4Fe-4S] cluster.

Belongs to the IspG family. Requires [4Fe-4S] cluster as cofactor.

It carries out the reaction (2E)-4-hydroxy-3-methylbut-2-enyl diphosphate + oxidized [flavodoxin] + H2O + 2 H(+) = 2-C-methyl-D-erythritol 2,4-cyclic diphosphate + reduced [flavodoxin]. It participates in isoprenoid biosynthesis; isopentenyl diphosphate biosynthesis via DXP pathway; isopentenyl diphosphate from 1-deoxy-D-xylulose 5-phosphate: step 5/6. In terms of biological role, converts 2C-methyl-D-erythritol 2,4-cyclodiphosphate (ME-2,4cPP) into 1-hydroxy-2-methyl-2-(E)-butenyl 4-diphosphate. The chain is 4-hydroxy-3-methylbut-2-en-1-yl diphosphate synthase (flavodoxin) from Campylobacter jejuni subsp. jejuni serotype O:2 (strain ATCC 700819 / NCTC 11168).